The chain runs to 1031 residues: MTAFSEILQRRDWENPQSVNIHCLKAHSPLASFRDMAHARDGIHAQRQSLNGQWKFKLFDAPEQVDGQFTQADFNDAEWDEIPVPSNWQLHGYDKPIYANIKYPFDVNPPFVPRENPTGCYRTRVSLSPEDLLNTQRIIFDGVNSAFHLWCNGTWVGYSQDSRLPAEFDLTSHLVAGENTLAVMVMRWCDGSYLEDQDMWWLSGIFRDVTLLSKPQHCIEDVFITPDLDACYRDGSLSIVTTIAAPETYQVQVQLFEGTQAVTEPNIDRPHNRRIDERGTWNDVVFQTLHLREPKKWTAETPNLYRLVVSLLDENGTHLESEAYPVGFRKVEISEGQLKLNGKPLLIRGVNRHEHHPELGHVMTEEDMIRDICLMKQYNFNAVRTAHYPNHPRWYELCDQYGLYVCDEANIETHGMQPMSRLSSDPQWAHAYMSRYTQMVLRDKNHPSIIIWSLGNESGHGSNHNAMYAWSKNFDPSRPVQYEGGGSNTTATDIIAPMYARVNTLIADEAVPKWPIKKWISLPNETRPLILCEYAHAMGNSLGSFDEYWAAFREFPRLQGGFIWDWVDQGLSQWDENGQHFWAYGGDFGDEINDRQFCINGLIFPDRTVHPTLQEAKYCQRMITVSLQEQTQKACTLLVTNENLFRATDNEQLNWSLLENGQVIQTGSLALSVEADSQTRLEIALNFTPKAQAQYHLNTDICLIEATSWAPAGHVVATEQMALRNHAGLAIPTLRTQPAPKLTQDGHAIVVSSLDEKHQWRWDSQSGLLMEWNVDGKAQMLAAPQDNFFRAPLDNDIGISEVDNVDPNAWVCRWEMAGIGQWERHCVHCDSETLAHTVVVTTTFAYHFGGDVQAITQWTHTLSNDGEMLLDVDVTLADTLPPMPRIGLELQLPLYQADTPITWQGLGPFENYPDRLAAARFGLHTQTLAQMHTPYIFPTDSGLRCGTQWLQVNELAISGDFQFSVSQYAQQQLAEAKHTHDLLAQERIYLRLDHQHMGVGGDDSWSPSVHKEFQLTEKHYRYQLRFKPASR.

Substrate-binding residues include Asn-100 and Asp-198. Na(+) is bound at residue Asp-198. 3 residues coordinate Mg(2+): Glu-412, His-414, and Glu-457. Substrate-binding positions include Glu-457 and 533–536 (EYAH). Glu-457 serves as the catalytic Proton donor. The active-site Nucleophile is the Glu-533. Asn-593 is a binding site for Mg(2+). Na(+) contacts are provided by Phe-597 and Asn-600. Substrate is bound by residues Asn-600 and Trp-1005.

This sequence belongs to the glycosyl hydrolase 2 family. As to quaternary structure, homotetramer. It depends on Mg(2+) as a cofactor. Na(+) is required as a cofactor.

The enzyme catalyses Hydrolysis of terminal non-reducing beta-D-galactose residues in beta-D-galactosides.. This chain is Beta-galactosidase, found in Vibrio vulnificus (strain YJ016).